A 162-amino-acid polypeptide reads, in one-letter code: Phosphopantetheine adenylyltransferase (162 aa).

Residue serine 9 participates in substrate binding. Residues 9–10 (SF) and histidine 17 each bind ATP. Substrate is bound by residues lysine 41, threonine 73, and arginine 87. ATP is bound by residues 88 to 90 (GLR), glutamate 98, and 123 to 129 (YSFISSS).

The protein belongs to the bacterial CoaD family. In terms of assembly, homohexamer. The cofactor is Mg(2+).

It is found in the cytoplasm. It catalyses the reaction (R)-4'-phosphopantetheine + ATP + H(+) = 3'-dephospho-CoA + diphosphate. It functions in the pathway cofactor biosynthesis; coenzyme A biosynthesis; CoA from (R)-pantothenate: step 4/5. Functionally, reversibly transfers an adenylyl group from ATP to 4'-phosphopantetheine, yielding dephospho-CoA (dPCoA) and pyrophosphate. The protein is Phosphopantetheine adenylyltransferase of Carboxydothermus hydrogenoformans (strain ATCC BAA-161 / DSM 6008 / Z-2901).